The primary structure comprises 863 residues: Receptor-like protein Cf-9 (863 aa).

The N-terminal stretch at 1–21 (MDCVKLVFLMLYTFLCQLALS) is a signal peptide. Residues 22–812 (SSLPHLCPED…EEDSPMISWQ (791 aa)) lie on the Extracellular side of the membrane. Positions 24-91 (LPHLCPEDQA…GVHCDETTGQ (68 aa)) are N-cap. Residues Asn-48, Asn-72, Asn-109, Asn-127, Asn-142, Asn-191, Asn-204, and Asn-212 are each glycosylated (N-linked (GlcNAc...) asparagine). One copy of the LRR 1; degenerate repeat lies at 92–115 (VIALDLRCSQLQGKFHSNSSLFQL). LRR repeat units follow at residues 116-139 (SNLKRLDLSFNNFTGSLISPKFGE) and 141-164 (SNLTHLDLSHSSFTGLIPSEICHL). An LRR 4; degenerate repeat occupies 165–191 (SKLHVLRICDQYGLSLVPYNFELLLKN). LRR repeat units follow at residues 192–214 (LTQLRELNLESVNISSTIPSNFS), 215–238 (SHLTTLQLSGTELHGILPERVFHL), 241–263 (LQSLHLSVNPQLTVRFPTTKWNS), 265–287 (ASLMTLYVDSVNIADRIPKSFSH), 288–312 (LTSLHELYMGRCNLSGPIPKPLWNL), 314–335 (NIVFLHLGDNHLEGPISHFTIF), 336–358 (EKLKRLSLVNNNFDGGLEFLSFN), 359–382 (TQLERLDLSSNSLTGPIPSNISGL), 383–406 (QNLECLYLSSNHLNGSIPSWIFSL), 408–428 (SLVELDLSNNTFSGKIQEFKS), 429–452 (KTLSAVTLKQNKLKGRIPNSLLNQ), 454–476 (NLQLLLLSHNNISGHISSAICNL), 477–500 (KTLILLDLGSNNLEGTIPQCVVER), 502–524 (EYLSHLDLSKNRLSGTINTTFSV), 525–549 (GNILRVISLHGNKLTGKVPRSMINC), 551–572 (YLTLLDLGNNMLNDTFPNWLGY), 573–597 (LFQLKILSLRSNKLHGPIKSSGNTN), 599–623 (FMGLQILDLSSNGFSGNLPERILGN), 667–690 (LDSNMIINLSKNRFEGHIPSIIGD), 691–714 (LVGLRTLNLSHNVLEGHIPASFQN), 715–739 (LSVLESLDLSSNKISGEIPQQLASL), and 741–759 (FLEVLNLSHNHLVGCIPKG). Asn-262 carries an N-linked (GlcNAc...) asparagine glycan. N-linked (GlcNAc...) asparagine glycans are attached at residues Asn-300 and Asn-311. N-linked (GlcNAc...) asparagine glycans are attached at residues Asn-378, Asn-396, and Asn-416. An N-linked (GlcNAc...) asparagine glycan is attached at Asn-464. Residue Asn-519 is glycosylated (N-linked (GlcNAc...) asparagine). Asn-563 carries an N-linked (GlcNAc...) asparagine glycan. N-linked (GlcNAc...) asparagine glycans are attached at residues Asn-698 and Asn-714. 2 N-linked (GlcNAc...) asparagine glycosylation sites follow: Asn-746 and Asn-767. The tract at residues 760–812 (KQFDSFGNTSYQGNDGLRGFPLSKLCGGEDQVTTPAELDQEEEEEDSPMISWQ) is C-cap/acidic domain. Residues 813 to 833 (GVLVGYGCGLVIGLSVIYIMW) traverse the membrane as a helical segment. Residues 834 to 863 (STQYPAWFSRMDLKLEHIITTKMKKHKKRY) lie on the Cytoplasmic side of the membrane.

It belongs to the RLP family. Interacts with thioredoxin-like protein CITRX.

Its subcellular location is the cell membrane. Its function is as follows. Involved in plant defense. Confers resistance to the fungal pathogen C.fulvum through recognition of the AVR9 elicitor protein. The sequence is that of Receptor-like protein Cf-9 from Solanum pimpinellifolium (Currant tomato).